A 228-amino-acid polypeptide reads, in one-letter code: Ribose-5-phosphate isomerase A (228 aa).

Residues 29-32, 85-88, and 98-101 each bind substrate; these read TGST, DGAD, and KGGG. Residue glutamate 107 is the Proton acceptor of the active site. A substrate-binding site is contributed by lysine 125.

Belongs to the ribose 5-phosphate isomerase family. Homodimer.

It catalyses the reaction aldehydo-D-ribose 5-phosphate = D-ribulose 5-phosphate. The protein operates within carbohydrate degradation; pentose phosphate pathway; D-ribose 5-phosphate from D-ribulose 5-phosphate (non-oxidative stage): step 1/1. Catalyzes the reversible conversion of ribose-5-phosphate to ribulose 5-phosphate. In Staphylococcus aureus (strain Mu50 / ATCC 700699), this protein is Ribose-5-phosphate isomerase A.